We begin with the raw amino-acid sequence, 579 residues long: Membrane frizzled-related protein (579 aa).

The Cytoplasmic portion of the chain corresponds to 1–69 (MKDFSDVILC…RPDCRFSWLC (69 aa)). Residues 70-90 (VLLLSSLLLLLLGLLVAIILA) traverse the membrane as a helical; Signal-anchor for type II membrane protein segment. The Extracellular portion of the chain corresponds to 91-579 (QLQAAPPSGA…AADLEACAQP (489 aa)). The tract at residues 100–143 (ASHSPLPAGGLTTTTTTPTITTSQAAGTPKGQQESGVSPSPQST) is disordered. Low complexity predominate over residues 111 to 121 (TTTTTTPTITT). Over residues 122–143 (SQAAGTPKGQQESGVSPSPQST) the composition is skewed to polar residues. 2 cysteine pairs are disulfide-bonded: Cys-144/Cys-170 and Cys-197/Cys-216. A CUB 1 domain is found at 144–253 (CGGLLSGPRG…FGFHAWYQAM (110 aa)). A glycan (N-linked (GlcNAc...) asparagine) is linked at Asn-227. Residues 259-295 (SCAHDEFRCDQLICLLPDSVCDGFANCADGSDETNCS) form the LDL-receptor class A 1 domain. 5 disulfide bridges follow: Cys-260–Cys-272, Cys-267–Cys-285, Cys-279–Cys-294, Cys-301–Cys-327, and Cys-354–Cys-377. Positions 301–414 (CGGNLTGLQG…GGFSATYLAF (114 aa)) constitute a CUB 2 domain. An N-linked (GlcNAc...) asparagine glycan is attached at Asn-415. One can recognise an LDL-receptor class A 2 domain in the interval 420 to 455 (PCGPSELSCQAGGCKGVQWMCDMWRDCTDGSDDNCS). Intrachain disulfides connect Cys-421-Cys-433, Cys-428-Cys-446, Cys-440-Cys-454, Cys-466-Cys-528, Cys-474-Cys-521, Cys-512-Cys-549, Cys-538-Cys-576, and Cys-542-Cys-564. In terms of domain architecture, FZ spans 461–579 (PPELACEPVQ…AADLEACAQP (119 aa)).

Interacts with C1QTNF5. In terms of tissue distribution, specifically expressed in brain. Strongly expressed in medulla oblongata and to a lower extent in hippocampus and corpus callosum. Expressed in keratinocytes.

Its subcellular location is the apical cell membrane. Its function is as follows. May play a role in eye development. This chain is Membrane frizzled-related protein (MFRP), found in Homo sapiens (Human).